Here is a 355-residue protein sequence, read N- to C-terminus: Apyrase apy-1 (355 aa).

The Cytoplasmic segment spans residues 1 to 6; it reads MTQESN. The chain crosses the membrane as a helical; Signal-anchor for type II membrane protein span at residues 7–29; it reads SNFFNFLLFGFVTAIAFYSGTQF. N-linked (GlcNAc...) asparagine glycosylation occurs at Asn-30. Residues 30–355 are Lumenal-facing; that stretch reads NKSSEQEEHI…PYKYEGIAFA (326 aa). Ca(2+)-binding residues include Ser-119, Glu-166, and Glu-235. Asn-291 carries an N-linked (GlcNAc...) asparagine glycan. Glu-350 lines the Ca(2+) pocket.

It belongs to the apyrase family. Requires Ca(2+) as cofactor.

It localises to the endomembrane system. The catalysed reaction is a ribonucleoside 5'-diphosphate + H2O = a ribonucleoside 5'-phosphate + phosphate + H(+). Its function is as follows. Hydrolyzes UDP and to a lesser extent GDP. By preventing the accumulation of NDP, may promote the reglucosylation of incompletely folded glycoproteins in the endoplasmic reticulum following the unfolded protein response. The sequence is that of Apyrase apy-1 from Caenorhabditis elegans.